We begin with the raw amino-acid sequence, 54 residues long: Large ribosomal subunit protein bL32c (54 aa).

It belongs to the bacterial ribosomal protein bL32 family.

Its subcellular location is the plastid. The protein localises to the chloroplast. In Lactuca sativa (Garden lettuce), this protein is Large ribosomal subunit protein bL32c.